The sequence spans 241 residues: Octanoyltransferase (241 aa).

In terms of domain architecture, BPL/LPL catalytic spans 43 to 228 (ADTPDEIWLV…RLTANLDGSP (186 aa)). Residues 83 to 90 (RGGQITYH), 159 to 161 (ALG), and 172 to 174 (GVS) each bind substrate. The active-site Acyl-thioester intermediate is the Cys-190.

Belongs to the LipB family.

The protein resides in the cytoplasm. It carries out the reaction octanoyl-[ACP] + L-lysyl-[protein] = N(6)-octanoyl-L-lysyl-[protein] + holo-[ACP] + H(+). The protein operates within protein modification; protein lipoylation via endogenous pathway; protein N(6)-(lipoyl)lysine from octanoyl-[acyl-carrier-protein]: step 1/2. Catalyzes the transfer of endogenously produced octanoic acid from octanoyl-acyl-carrier-protein onto the lipoyl domains of lipoate-dependent enzymes. Lipoyl-ACP can also act as a substrate although octanoyl-ACP is likely to be the physiological substrate. This is Octanoyltransferase from Paraburkholderia phytofirmans (strain DSM 17436 / LMG 22146 / PsJN) (Burkholderia phytofirmans).